The sequence spans 142 residues: Small ribosomal subunit protein uS12 (142 aa).

It belongs to the universal ribosomal protein uS12 family. Part of the 30S ribosomal subunit.

With S4 and S5 plays an important role in translational accuracy. Located at the interface of the 30S and 50S subunits. The polypeptide is Small ribosomal subunit protein uS12 (Thermoplasma acidophilum (strain ATCC 25905 / DSM 1728 / JCM 9062 / NBRC 15155 / AMRC-C165)).